A 397-amino-acid polypeptide reads, in one-letter code: P2X purinoceptor 3 (397 aa).

Topologically, residues 1 to 20 are cytoplasmic; sequence MNCISDFFTYETTKSVVVKS. A helical membrane pass occupies residues 21–43; the sequence is WTIGIINRAVQLLIISYFVGWVF. At 44–322 the chain is on the extracellular side; the sequence is LHEKAYQVRD…AGKFNIIPTI (279 aa). The ATP site is built by lysine 63 and lysine 65. 3 disulfide bridges follow: cysteine 107–cysteine 153, cysteine 116–cysteine 137, and cysteine 122–cysteine 147. Glutamate 111 provides a ligand contact to Mg(2+). N-linked (GlcNAc...) asparagine glycosylation is present at asparagine 139. Position 158 (aspartate 158) interacts with Mg(2+). A Ca(2+)-binding site is contributed by aspartate 158. N-linked (GlcNAc...) asparagine glycosylation is present at asparagine 170. Threonine 172 contributes to the ATP binding site. Asparagine 194 is a glycosylation site (N-linked (GlcNAc...) asparagine). 2 cysteine pairs are disulfide-bonded: cysteine 203–cysteine 213 and cysteine 247–cysteine 256. Serine 275, asparagine 279, and arginine 281 together coordinate ATP. A glycan (N-linked (GlcNAc...) asparagine) is linked at asparagine 290. An ATP-binding site is contributed by lysine 299. The helical transmembrane segment at 323–341 threads the bilayer; that stretch reads ISSVAAFTSVGVGTVLCDI. Residues 342-397 lie on the Cytoplasmic side of the membrane; the sequence is ILLNFLKGADHYKARKFEEVTETTLKGTASTNPVFASDQATVEKQSTDSGAYSIGH.

This sequence belongs to the P2X receptor family. As to quaternary structure, homotrimer. Forms heterotrimer with P2RX2. Heterotrimeric P2RX2/3 has a ligand dose-response profile that is distinct from either homotrimeric P2RX2 or P2RX3. In terms of tissue distribution, selectively expressed in sensory ganglia.

The protein resides in the cell membrane. It carries out the reaction Ca(2+)(in) = Ca(2+)(out). The catalysed reaction is Na(+)(in) = Na(+)(out). Its activity is regulated as follows. Has high sensitivity to ATP. Fast activation by external ATP. Exhibits rapid desensitization. Sensitives to the ATP agonist:alpha/beta-methylene-ATP. Subject to allosteric inhibition by AF-219. Mg(2+) and Ca(2+) slow deactivation of P2RX3. Its function is as follows. Extracellular ATP-activated non-selective cation channel. Plays particularly important role in sensory neurons where its activation is critical for gustatory, nociceptive responses, visceral reflexes and sensory hypersensitization. The protein is P2X purinoceptor 3 (P2rx3) of Rattus norvegicus (Rat).